The primary structure comprises 460 residues: Elongation factor 1-alpha (460 aa).

Gly-2 is modified (n,N,N-trimethylglycine). Lys-3 bears the N6,N6-dimethyllysine; alternate mark. Lys-3 is subject to N6-methyllysine; alternate. The tr-type G domain occupies 6 to 241 (KQHINIVVIG…DAIEPPVRPT (236 aa)). Residues 15–22 (GHVDSGKS) are G1. 15 to 22 (GHVDSGKS) provides a ligand contact to GTP. Lys-31 is subject to N6-methyllysine. Residues 71-75 (GITID) form a G2 region. Residue Lys-80 is modified to N6,N6,N6-trimethyllysine. The G3 stretch occupies residues 92-95 (DAPG). Residues 92–96 (DAPGH) and 154–157 (NKMD) each bind GTP. The G4 stretch occupies residues 154-157 (NKMD). The interval 193-195 (SGF) is G5. At Lys-317 the chain carries N6,N6-dimethyllysine; alternate. Residue Lys-317 is modified to N6-methyllysine; alternate. At Lys-391 the chain carries N6-methyllysine.

Belongs to the TRAFAC class translation factor GTPase superfamily. Classic translation factor GTPase family. EF-Tu/EF-1A subfamily.

It is found in the cytoplasm. Its function is as follows. This protein promotes the GTP-dependent binding of aminoacyl-tRNA to the A-site of ribosomes during protein biosynthesis. The polypeptide is Elongation factor 1-alpha (tef1) (Aspergillus oryzae (strain ATCC 42149 / RIB 40) (Yellow koji mold)).